A 213-amino-acid polypeptide reads, in one-letter code: Ribonuclease HII (213 aa).

The RNase H type-2 domain maps to 20–209 (ELVAGVDEVG…VRQAYEALEG (190 aa)). The a divalent metal cation site is built by Asp-26, Glu-27, and Asp-118.

It belongs to the RNase HII family. The cofactor is Mn(2+). Requires Mg(2+) as cofactor.

The protein resides in the cytoplasm. It carries out the reaction Endonucleolytic cleavage to 5'-phosphomonoester.. Endonuclease that specifically degrades the RNA of RNA-DNA hybrids. This is Ribonuclease HII from Pseudomonas fluorescens (strain Pf0-1).